The primary structure comprises 434 residues: Probable exopolygalacturonase A (434 aa).

The N-terminal stretch at 1 to 19 is a signal peptide; sequence MKLPILVTLFITLPALCVS. N-linked (GlcNAc...) asparagine glycans are attached at residues Asn46, Asn57, Asn106, Asn199, and Asn207. Residues 232 to 253 form a PbH1 1 repeat; it reads SSNIVIQDSRIVNTDDCVSFKP. The Proton donor role is filled by Asp246. Cys248 and Cys265 are joined by a disulfide. Asn254 carries an N-linked (GlcNAc...) asparagine glycan. One copy of the PbH1 2 repeat lies at 255–275; the sequence is STQIVIQNLDCTGSHGISVGS. His269 is an active-site residue. N-linked (GlcNAc...) asparagine glycosylation is found at Asn293, Asn329, and Asn354. Residues Cys392 and Cys398 are joined by a disulfide bond. The N-linked (GlcNAc...) asparagine glycan is linked to Asn400.

It belongs to the glycosyl hydrolase 28 family.

The protein localises to the secreted. The catalysed reaction is [(1-&gt;4)-alpha-D-galacturonosyl](n) + H2O = alpha-D-galacturonate + [(1-&gt;4)-alpha-D-galacturonosyl](n-1). Specific in hydrolyzing the terminal glycosidic bond of polygalacturonic acid and oligogalacturonates. This is Probable exopolygalacturonase A (pgxA) from Aspergillus niger (strain ATCC MYA-4892 / CBS 513.88 / FGSC A1513).